The primary structure comprises 430 residues: MEQHIYLIGMNHRTASIDVRECFALTEHCSKDDWAIPLIKGIQESLILSTCNRVEILAVGDSNTPEIILSAWAKVKTRSIEELVPHTYTYQGRSAISHLFCVASSLDSMVLGEPQILGQLKDAYKLATIAGASKTILNRLLHKAFSVAKRVRTETSIASNAVSISYAAVKLAKKIFGTMNQYKAMLIGAGEMAELAAMHLMQAGIQQLKIVNRTYSQAQELASQFRGEAIPFEKLVTYLAEVDIVISSTGAPQTIIHFNDIKNILSKRKHYPMLFIDIAVPRDIDPNVHQLDNIYLYDIDDLKEIVEDNIVQRQDEAIKAKHIIQDEIDSFCAWLQALILQPTIVDLRKRFSTYAEEELERTLKKIGPVDRKTREALETMIDALIRKLTHDPISYLKCAHRTIDTNHITLARQMFNLDKIPQTNKAVNED.

Substrate-binding positions include 50 to 53 (TCNR), S108, 113 to 115 (EPQ), and Q119. C51 acts as the Nucleophile in catalysis. NADP(+) is bound at residue 188–193 (GAGEMA).

This sequence belongs to the glutamyl-tRNA reductase family. In terms of assembly, homodimer.

The catalysed reaction is (S)-4-amino-5-oxopentanoate + tRNA(Glu) + NADP(+) = L-glutamyl-tRNA(Glu) + NADPH + H(+). Its pathway is porphyrin-containing compound metabolism; protoporphyrin-IX biosynthesis; 5-aminolevulinate from L-glutamyl-tRNA(Glu): step 1/2. Functionally, catalyzes the NADPH-dependent reduction of glutamyl-tRNA(Glu) to glutamate 1-semialdehyde (GSA). The polypeptide is Glutamyl-tRNA reductase (Lawsonia intracellularis (strain PHE/MN1-00)).